The primary structure comprises 580 residues: CDKN2A-interacting protein (580 aa).

Ala2 carries the N-acetylalanine modification. The region spanning 19–133 (VEALRCDGET…KVKKRGISSS (115 aa)) is the XRN2-binding (XTBD) domain. The interval 129–356 (GISSSNEGVE…PKSSSSTNTS (228 aa)) is disordered. At Ser131 the chain carries Phosphoserine. A compositionally biased stretch (basic and acidic residues) spans 155–167 (EQDHAKTSAKTER). Positions 168-179 (ASAQQENSSTCI) are enriched in polar residues. Lys184 participates in a covalent cross-link: Glycyl lysine isopeptide (Lys-Gly) (interchain with G-Cter in SUMO1). Residues 185 to 228 (SESGNSARSSGISSQNSSTSDGDRSVSSQSSSSVSSQVTTAGSG) are compositionally biased toward low complexity. Over residues 231-240 (SEAEAPDKHG) the composition is skewed to basic and acidic residues. Ser241 bears the Phosphoserine mark. Polar residues predominate over residues 248–269 (LKSSVNSHMTQSTDSRQQSGSP). Composition is skewed to low complexity over residues 274–313 (LEGS…PSSE) and 321–356 (SKTS…TNTS). Thr346 is modified (phosphothreonine). Ser389 carries the post-translational modification Phosphoserine. One can recognise a DRBM domain in the interval 462 to 537 (NHGELLNAAI…SREALKLFLK (76 aa)).

The protein belongs to the CARF family. Interacts with CDKN2A/p14ARF, p53/TP53 and MDM2. Interacts with CHEK2 and MAPK3. Interacts with XRN2. In terms of processing, may be ubiquitinated. As to expression, ubiquitously expressed.

The protein localises to the nucleus. The protein resides in the nucleoplasm. Regulates DNA damage response in a dose-dependent manner through a number of signaling pathways involved in cell proliferation, apoptosis and senescence. The sequence is that of CDKN2A-interacting protein (CDKN2AIP) from Homo sapiens (Human).